The primary structure comprises 404 residues: MTGRSRVLAMRHVGGVSPVLVRRDLFLTRTLCSHGPSQPREKRPEEVALGLYHRLTALGAALGHSIRQRASSTAKTWWDRYEEFVGLNEVREAQGNVTEAEKVFMVARGLVREAREDLESQQTKLKEVRDRLDRISRDDNQYLELATLEHRMLQEEKRLRMTYLRAEDSEREKFSLFSAAVRESHEKERTRAERTKNWSLIGSVLGALIGVAGSTYVNRVRLQELKALLLEAQKGPVSLQEAIREQASSYSLQQRDLRDLVADLKGLVQAGTGQGSLSQAGSSPTQDRDTDVLSAALREQLSHSRQVRSRLEGLREQLDGLEKTVSQVAGVVQLAKAAAHPGLESADGALPGSLLEQGSMIMALSDTEQRLEAQVNRNTVYGTLVTCATFVAVLPVLYMLFRAS.

A mitochondrion-targeting transit peptide spans 1 to 30; sequence MTGRSRVLAMRHVGGVSPVLVRRDLFLTRT. The Mitochondrial matrix segment spans residues 31-196; sequence LCSHGPSQPR…KERTRAERTK (166 aa). At Ser-65 the chain carries Phosphoserine. Residues 111-138 are a coiled coil; that stretch reads VREAREDLESQQTKLKEVRDRLDRISRD. The chain crosses the membrane as a helical span at residues 197–217; it reads NWSLIGSVLGALIGVAGSTYV. Over 218-380 the chain is Mitochondrial intermembrane; sequence NRVRLQELKA…LEAQVNRNTV (163 aa). The helical transmembrane segment at 381-401 threads the bilayer; sequence YGTLVTCATFVAVLPVLYMLF. The Mitochondrial matrix segment spans residues 402-404; the sequence is RAS.

The mitochondrial potassium channel (mitoK(ATP)) forms a heteromultimer.

It is found in the mitochondrion inner membrane. The enzyme catalyses K(+)(in) = K(+)(out). Channel activity inhibited by ATP via ABCB8/MITOSUR subunit. In terms of biological role, pore-forming subunit of the mitochondrial ATP-gated potassium channel (mitoK(ATP)). Together with ATP-binding subunit ABCB8/MITOSUR of the mitoK(ATP) channel, mediates ATP-dependent K(+) currents across the mitochondrial inner membrane. An increase in ATP intracellular levels closes the channel, inhibiting K(+) transport, whereas a decrease in ATP levels enhances K(+) uptake in the mitochondrial matrix. May contribute to the homeostatic control of cellular metabolism under stress conditions by regulating the mitochondrial matrix volume. The protein is Mitochondrial potassium channel of Bos taurus (Bovine).